The sequence spans 600 residues: NADH-quinone oxidoreductase subunit C/D (600 aa).

The segment at 1-190 (MVNNMTDLTA…SPFELTKAKQ (190 aa)) is NADH dehydrogenase I subunit C. Positions 214 to 600 (DFMFLNLGPN…IDFVMSDVDR (387 aa)) are NADH dehydrogenase I subunit D.

It in the N-terminal section; belongs to the complex I 30 kDa subunit family. This sequence in the C-terminal section; belongs to the complex I 49 kDa subunit family. As to quaternary structure, NDH-1 is composed of 13 different subunits. Subunits NuoB, CD, E, F, and G constitute the peripheral sector of the complex.

It is found in the cell inner membrane. The enzyme catalyses a quinone + NADH + 5 H(+)(in) = a quinol + NAD(+) + 4 H(+)(out). NDH-1 shuttles electrons from NADH, via FMN and iron-sulfur (Fe-S) centers, to quinones in the respiratory chain. The immediate electron acceptor for the enzyme in this species is believed to be ubiquinone. Couples the redox reaction to proton translocation (for every two electrons transferred, four hydrogen ions are translocated across the cytoplasmic membrane), and thus conserves the redox energy in a proton gradient. In Shigella boydii serotype 18 (strain CDC 3083-94 / BS512), this protein is NADH-quinone oxidoreductase subunit C/D.